Here is a 374-residue protein sequence, read N- to C-terminus: tRNA-specific 2-thiouridylase MnmA (374 aa).

ATP contacts are provided by residues 12 to 19 (GMSGGVDS) and Met38. Residues 98 to 100 (NPD) are interaction with target base in tRNA. Cys103 acts as the Nucleophile in catalysis. Cys103 and Cys202 are oxidised to a cystine. Residue Gly128 coordinates ATP. The tract at residues 152-154 (KDQ) is interaction with tRNA. Cys202 functions as the Cysteine persulfide intermediate in the catalytic mechanism. Positions 316-317 (RY) are interaction with tRNA.

The protein belongs to the MnmA/TRMU family.

Its subcellular location is the cytoplasm. It carries out the reaction S-sulfanyl-L-cysteinyl-[protein] + uridine(34) in tRNA + AH2 + ATP = 2-thiouridine(34) in tRNA + L-cysteinyl-[protein] + A + AMP + diphosphate + H(+). In terms of biological role, catalyzes the 2-thiolation of uridine at the wobble position (U34) of tRNA, leading to the formation of s(2)U34. The protein is tRNA-specific 2-thiouridylase MnmA of Vibrio vulnificus (strain CMCP6).